A 507-amino-acid polypeptide reads, in one-letter code: ATP synthase subunit alpha, chloroplastic (507 aa).

170–177 (GDRQTGKT) serves as a coordination point for ATP.

It belongs to the ATPase alpha/beta chains family. As to quaternary structure, F-type ATPases have 2 components, CF(1) - the catalytic core - and CF(0) - the membrane proton channel. CF(1) has five subunits: alpha(3), beta(3), gamma(1), delta(1), epsilon(1). CF(0) has four main subunits: a, b, b' and c.

It is found in the plastid. Its subcellular location is the chloroplast thylakoid membrane. The catalysed reaction is ATP + H2O + 4 H(+)(in) = ADP + phosphate + 5 H(+)(out). In terms of biological role, produces ATP from ADP in the presence of a proton gradient across the membrane. The alpha chain is a regulatory subunit. This chain is ATP synthase subunit alpha, chloroplastic, found in Buxus microphylla (Littleleaf boxwood).